The chain runs to 279 residues: High choriolytic enzyme 2 (279 aa).

The first 20 residues, 1-20 (MNLASSACLLLLFLLGIAQA), serve as a signal peptide directing secretion. A propeptide spans 21 to 79 (LPVQNEEGHEEGNKEGHGEEGVEEGDEDDFVDFTTRILTSNNNTDQLLLEGDLVAPTNR) (activation peptide). A compositionally biased stretch (basic and acidic residues) spans 26–40 (EEGHEEGNKEGHGEE). The interval 26 to 46 (EEGHEEGNKEGHGEEGVEEGD) is disordered. N-linked (GlcNAc...) asparagine glycosylation is present at asparagine 62. Residues 80–279 (NAMKCWYNSC…TRSNVLYNCR (200 aa)) form the Peptidase M12A domain. 3 cysteine pairs are disulfide-bonded: cysteine 84-cysteine 89, cysteine 129-cysteine 278, and cysteine 150-cysteine 170. Histidine 178 provides a ligand contact to Zn(2+). Glutamate 179 is an active-site residue. Residues histidine 182 and histidine 188 each contribute to the Zn(2+) site.

The cofactor is Zn(2+).

It localises to the zymogen granule. It catalyses the reaction Hydrolysis of the inner layer of fish egg envelope. Also hydrolysis of casein and small molecule substrates such as succinyl-Leu-Leu-Val-Tyr-|-7-(4-methyl)coumarylamide.. In terms of biological role, participates in the breakdown of the egg envelope, which is derived from the egg extracellular matrix, at the time of hatching. Thus allowing the newly hatched fish to swim free. HCE binds tightly to the egg envelope while it exerts the choriolytic swelling action. This Oryzias latipes (Japanese rice fish) protein is High choriolytic enzyme 2 (hceb).